The following is a 310-amino-acid chain: Ribosomal protein uL3 glutamine methyltransferase (310 aa).

This sequence belongs to the protein N5-glutamine methyltransferase family. PrmB subfamily.

The catalysed reaction is L-glutaminyl-[ribosomal protein uL3] + S-adenosyl-L-methionine = N(5)-methyl-L-glutaminyl-[ribosomal protein uL3] + S-adenosyl-L-homocysteine + H(+). Its function is as follows. Methylates large ribosomal subunit protein uL3 on a specific glutamine residue. This chain is Ribosomal protein uL3 glutamine methyltransferase, found in Aliivibrio fischeri (strain ATCC 700601 / ES114) (Vibrio fischeri).